The sequence spans 614 residues: Vitamin B12 transporter BtuB (614 aa).

The signal sequence occupies residues 1-20 (MIKKASLLTACSVTAFSAWA). The TonB box motif lies at 26-33 (DTLVVTAN). A TBDR plug domain is found at 38–152 (PRSTVLAPTT…IGGVVNIITT (115 aa)). Residues Leu-83, Ser-85, Asn-92, and 110–111 (VS) contribute to the cyanocob(III)alamin site. The region spanning 155–614 (EPGTEISAGW…EYTLSGSYTF (460 aa)) is the TBDR beta-barrel domain. 3 beta stranded membrane passes run 158–165 (TEISAGWG), 169–178 (YQNYDVSTQQ), and 184–195 (TRVTLLGDYAHT). Residues Asp-199, Gln-211, Asp-213, and Asp-215 each coordinate Ca(2+). The next 2 membrane-spanning stretches (beta stranded) occupy residues 217–227 (FLSKTLYGALE) and 232–248 (DAWS…NRTN). Positions 249 and 250 each coordinate Ca(2+). Residue Ala-251 coordinates cyanocob(III)alamin. Asp-261 serves as a coordination point for Ca(2+). Beta stranded transmembrane passes span 263–277 (RKLY…LRYN), 279–296 (ELIK…KDYN), 309–325 (TLDE…NNVI), 328–337 (HGSIGAGVDW), 353–369 (YDQR…QQVG), 371–381 (FTFEGAARNDD), 385–400 (FGRH…WEFI), 403–417 (YRFI…KAPN), 434–443 (KSKQWEGAFE), 449–458 (VNWRISGYRN), 473–490 (YYNE…TANF), 494–509 (PLTH…ARNA), 517–529 (RRAK…QLDW), and 535–550 (DWGI…YDKD). Thr-309 contributes to the cyanocob(III)alamin binding site. Position 517 (Arg-517) interacts with cyanocob(III)alamin. Position 551 (Tyr-551) interacts with cyanocob(III)alamin. Beta stranded transmembrane passes span 558-572 (TVKM…LAVA), 585-596 (IANLFDKDYETV), and 602-614 (AGRE…SYTF). A TonB C-terminal box motif is present at residues 597 to 614 (YGYQTAGREYTLSGSYTF).

The protein belongs to the TonB-dependent receptor family. BtuB (TC 1.B.14.3.1) subfamily.

Its subcellular location is the cell outer membrane. Involved in the active translocation of vitamin B12 (cyanocobalamin) across the outer membrane to the periplasmic space. It derives its energy for transport by interacting with the trans-periplasmic membrane protein TonB. This Escherichia coli O139:H28 (strain E24377A / ETEC) protein is Vitamin B12 transporter BtuB.